Reading from the N-terminus, the 457-residue chain is Dihydrolipoyl dehydrogenase (457 aa).

FAD-binding positions include 32-40, lysine 49, and alanine 113; that span reads EKQYFGGVC. A disulfide bridge links cysteine 40 with cysteine 45. Residues 178–182, valine 235, and 262–265 each bind NAD(+); these read GGGVI and SIGR. FAD contacts are provided by aspartate 303 and alanine 311. Histidine 437 (proton acceptor) is an active-site residue.

This sequence belongs to the class-I pyridine nucleotide-disulfide oxidoreductase family. As to quaternary structure, homodimer. FAD serves as cofactor.

Its subcellular location is the cytoplasm. The catalysed reaction is N(6)-[(R)-dihydrolipoyl]-L-lysyl-[protein] + NAD(+) = N(6)-[(R)-lipoyl]-L-lysyl-[protein] + NADH + H(+). Lipoamide dehydrogenase is a component of the alpha-ketoacid dehydrogenase complexes. The chain is Dihydrolipoyl dehydrogenase (pdhD) from Mycoplasma genitalium (strain ATCC 33530 / DSM 19775 / NCTC 10195 / G37) (Mycoplasmoides genitalium).